A 322-amino-acid polypeptide reads, in one-letter code: Beta-ketoacyl-[acyl-carrier-protein] synthase III (322 aa).

Active-site residues include Cys-113 and His-249. Residues 250–254 form an ACP-binding region; the sequence is QANLR. The active site involves Asn-279.

The protein belongs to the thiolase-like superfamily. FabH family. Homodimer.

It localises to the cytoplasm. It carries out the reaction malonyl-[ACP] + acetyl-CoA + H(+) = 3-oxobutanoyl-[ACP] + CO2 + CoA. It participates in lipid metabolism; fatty acid biosynthesis. Its function is as follows. Catalyzes the condensation reaction of fatty acid synthesis by the addition to an acyl acceptor of two carbons from malonyl-ACP. Catalyzes the first condensation reaction which initiates fatty acid synthesis and may therefore play a role in governing the total rate of fatty acid production. Possesses both acetoacetyl-ACP synthase and acetyl transacylase activities. Its substrate specificity determines the biosynthesis of branched-chain and/or straight-chain of fatty acids. This chain is Beta-ketoacyl-[acyl-carrier-protein] synthase III, found in Marinobacter nauticus (strain ATCC 700491 / DSM 11845 / VT8) (Marinobacter aquaeolei).